The primary structure comprises 105 residues: uncharacterized protein (105 aa).

Over residues 1–11 the composition is skewed to basic residues; it reads MPHRNDRRKSA. The tract at residues 1 to 20 is disordered; the sequence is MPHRNDRRKSASKAPNAIIH.

It belongs to the ALB1 family.

It localises to the nucleus. It is found in the nucleolus. This is an uncharacterized protein from Schizosaccharomyces pombe (strain 972 / ATCC 24843) (Fission yeast).